An 89-amino-acid polypeptide reads, in one-letter code: Small ribosomal subunit protein uS15 (89 aa).

This sequence belongs to the universal ribosomal protein uS15 family. As to quaternary structure, part of the 30S ribosomal subunit. Forms a bridge to the 50S subunit in the 70S ribosome, contacting the 23S rRNA.

One of the primary rRNA binding proteins, it binds directly to 16S rRNA where it helps nucleate assembly of the platform of the 30S subunit by binding and bridging several RNA helices of the 16S rRNA. In terms of biological role, forms an intersubunit bridge (bridge B4) with the 23S rRNA of the 50S subunit in the ribosome. This chain is Small ribosomal subunit protein uS15, found in Corynebacterium diphtheriae (strain ATCC 700971 / NCTC 13129 / Biotype gravis).